A 497-amino-acid chain; its full sequence is MDLQRGFVFLSLVLSFMIIETTAYRERQLLLLQPPQETAIDTANAVVTVQDRGLKTRRPEHKNAYATMMYMGTPRDYEFYVATRVLIRSLRSLHVEADLVVIASLDVPLRWVQTLEEEDGAKVVRVENVDNPYRRQTNFNSRFKLTLNKLYAWALSDYDRVVMLDADNLFLKKADELFQCGRFCAVFINPCIFHTGLFVLQPSVEVFKDMLHELQVGRKNPDGADQGFLVSYFSDLLDQPLFSPPSNGSVLNGHLRLPLGYQMDASYFYLKLRWNIPCGPNSVITFPGAVWLKPWYWWSWPVLPLGFSWHEQRRATIGYSAEMPLVIIQAMFYLGIIVVTRLARPNITKLCYRRSDRNLTTIQAGFKLIALLSVVAAYIFPFFTIPHTIHPLIGWSLYLMASFALSSISINTLLLPTLPVLTPWLGILGTLLVMAFPWYPDGVVRALSVFAYAFCCAPFVWVSFRKITSHLQVLIEKEVLFPRLGDSGVTSGFSKLY.

A helical transmembrane segment spans residues 3-23 (LQRGFVFLSLVLSFMIIETTA). Mn(2+)-binding residues include aspartate 165 and aspartate 167. 5 consecutive transmembrane segments (helical) span residues 319–339 (YSAE…IIVV), 365–385 (GFKL…FFTI), 388–408 (TIHP…LSSI), 418–438 (LPVL…AFPW), and 442–462 (GVVR…FVWV).

This sequence belongs to the glycosyltransferase 8 family. Glycogenin subfamily. Mn(2+) is required as a cofactor.

Its subcellular location is the membrane. The polypeptide is Putative glucuronosyltransferase PGSIP8 (PGSIP8) (Arabidopsis thaliana (Mouse-ear cress)).